The sequence spans 1416 residues: Isonitrile lipopeptide synthase (1416 aa).

A coiled-coil region spans residues 188 to 215 (LRETAKVAEALRRQADAVQRELTAEAGQ). The region spanning 965-1028 (RVWSRHLGRP…NLVCDLGSNP (64 aa)) is the Carrier domain. S988 is subject to O-(pantetheine 4'-phosphoryl)serine.

It belongs to the ATP-dependent AMP-binding enzyme family. The cofactor is pantetheine 4'-phosphate.

The enzyme catalyses 2 a (3R)-3-isocyanyl-fatty acyl-[ACP] + L-lysine + ATP + 2 NADPH = an isonitrile lipopeptide + 2 holo-[ACP] + AMP + diphosphate + 2 NADP(+). Nonribosomal peptide synthetase (NRPS) involved in the biosynthesis of a unique class of isonitrile lipopeptides (INLPs) that seem to play a role in metal acquisition in M.marinum. Catalyzes the final step in the pathway, i.e. the condensation of a (3R)-3-isocyanyl-fatty acyl-[ACP] to both amino groups of a lysine, producing isonitrile lipopeptides. In Mycobacterium marinum (strain ATCC BAA-535 / M), this protein is Isonitrile lipopeptide synthase.